The following is a 539-amino-acid chain: Bifunctional purine biosynthesis protein PurH (539 aa).

An MGS-like domain is found at 8–159 (FPIPDLHRVR…KNYAYTGVVT (152 aa)).

This sequence belongs to the PurH family.

The catalysed reaction is (6R)-10-formyltetrahydrofolate + 5-amino-1-(5-phospho-beta-D-ribosyl)imidazole-4-carboxamide = 5-formamido-1-(5-phospho-D-ribosyl)imidazole-4-carboxamide + (6S)-5,6,7,8-tetrahydrofolate. The enzyme catalyses IMP + H2O = 5-formamido-1-(5-phospho-D-ribosyl)imidazole-4-carboxamide. The protein operates within purine metabolism; IMP biosynthesis via de novo pathway; 5-formamido-1-(5-phospho-D-ribosyl)imidazole-4-carboxamide from 5-amino-1-(5-phospho-D-ribosyl)imidazole-4-carboxamide (10-formyl THF route): step 1/1. Its pathway is purine metabolism; IMP biosynthesis via de novo pathway; IMP from 5-formamido-1-(5-phospho-D-ribosyl)imidazole-4-carboxamide: step 1/1. The polypeptide is Bifunctional purine biosynthesis protein PurH (Bartonella tribocorum (strain CIP 105476 / IBS 506)).